The chain runs to 115 residues: Small polypeptide DEVIL 13 (115 aa).

Positions 1 to 12 (MEEKWKLSKKDT) are enriched in basic and acidic residues. The tract at residues 1–89 (MEEKWKLSKK…SITQKYSSLA (89 aa)) is disordered. The span at 13–65 (TASSSSSKSKFSRSFSTSASSTKSPIFVRSSSTKCSVPSSSSSSSSSSSISRS) shows a compositional bias: low complexity. Residues 44–63 (STKCSVPSSSSSSSSSSSIS) traverse the membrane as a helical segment. The required for DVL/RTFL small polypeptide activity stretch occupies residues 80–111 (SITQKYSSLAKEQKARFYIMRRCVAMLVCWHK).

This sequence belongs to the DVL/RTFL small polypeptides family.

It is found in the cell membrane. Functionally, small polypeptide acting as a regulatory molecule which coordinates cellular responses required for differentiation, growth and development, probably by restricting polar cell proliferation in lateral organs and coordinating socket cell recruitment and differentiation at trichome sites. In Arabidopsis thaliana (Mouse-ear cress), this protein is Small polypeptide DEVIL 13.